Reading from the N-terminus, the 583-residue chain is Aspartate--tRNA ligase (583 aa).

Residue E169 coordinates L-aspartate. The interval 193–196 (QLFK) is aspartate. Residue R215 coordinates L-aspartate. Residues 215–217 (RDE) and Q224 contribute to the ATP site. H443 is a binding site for L-aspartate. Residue E477 participates in ATP binding. R484 is a binding site for L-aspartate. An ATP-binding site is contributed by 529 to 532 (GIDR).

The protein belongs to the class-II aminoacyl-tRNA synthetase family. Type 1 subfamily. In terms of assembly, homodimer.

It localises to the cytoplasm. The catalysed reaction is tRNA(Asp) + L-aspartate + ATP = L-aspartyl-tRNA(Asp) + AMP + diphosphate. Catalyzes the attachment of L-aspartate to tRNA(Asp) in a two-step reaction: L-aspartate is first activated by ATP to form Asp-AMP and then transferred to the acceptor end of tRNA(Asp). This is Aspartate--tRNA ligase from Stenotrophomonas maltophilia (strain R551-3).